The chain runs to 150 residues: Calmodulin (150 aa).

EF-hand domains lie at 9-44 (EQIAEFREAFSLFDRDQDGNITSNELGVVMRSLGQS), 45-80 (PTAAELQDMINEVDADGNGTIDFTEFLTMMARKMKD), 82-117 (DNEEEVREAFKVFDKDGNGYITVEELTHVLTSLGER), and 118-150 (LSQEEVADMIREADTDGDGVINYEEFSRVISSK). Ca(2+) contacts are provided by Asp-22, Asp-24, Asp-26, Asn-28, Glu-33, Asp-58, Asp-60, Asn-62, Thr-64, Glu-69, Asp-95, Asp-97, Asn-99, Tyr-101, Glu-106, Asp-131, Asp-133, Asp-135, and Glu-142.

It belongs to the calmodulin family. As to quaternary structure, interacts with rng2.

It localises to the cytoplasm. It is found in the cytoskeleton. The protein resides in the microtubule organizing center. Its subcellular location is the spindle pole body. Functionally, calmodulin mediates the control of a large number of enzymes, ion channels and other proteins by Ca(2+). Among the enzymes to be stimulated by the calmodulin-Ca(2+) complex are a number of protein kinases and phosphatases. This chain is Calmodulin (cam1), found in Schizosaccharomyces pombe (strain 972 / ATCC 24843) (Fission yeast).